Reading from the N-terminus, the 346-residue chain is Elongation factor Ts (346 aa).

The involved in Mg(2+) ion dislocation from EF-Tu stretch occupies residues 80–83; sequence TDFV.

Belongs to the EF-Ts family.

It localises to the cytoplasm. Associates with the EF-Tu.GDP complex and induces the exchange of GDP to GTP. It remains bound to the aminoacyl-tRNA.EF-Tu.GTP complex up to the GTP hydrolysis stage on the ribosome. The chain is Elongation factor Ts from Streptococcus pyogenes serotype M3 (strain ATCC BAA-595 / MGAS315).